Reading from the N-terminus, the 521-residue chain is Melanopsin (521 aa).

Topologically, residues 1–71 are extracellular; that stretch reads MDSPSGPRVL…VDVPDHAHYT (71 aa). N-linked (GlcNAc...) asparagine glycans are attached at residues Asn30 and Asn34. A helical membrane pass occupies residues 72 to 92; sequence LGTVILLVGLTGMLGNLTVIY. Over 93 to 106 the chain is Cytoplasmic; it reads TFCRNRGLRTPANM. Residues 107 to 127 form a helical membrane-spanning segment; that stretch reads FIINLAVSDFLMSVTQAPVFF. Residues 128–143 lie on the Extracellular side of the membrane; that stretch reads ASSLYKKWLFGETGCE. A disulfide bridge links Cys142 with Cys220. The chain crosses the membrane as a helical span at residues 144-164; it reads FYAFCGAVFGITSMITLTAIA. The Cytoplasmic segment spans residues 165-187; the sequence is MDRYLVITRPLATIGRGSKRRTA. The chain crosses the membrane as a helical span at residues 188-208; sequence LVLLGVWLYALAWSLPPFFGW. At 209 to 237 the chain is on the extracellular side; it reads SAYVPEGLLTSCSWDYMTFTPQVRAYTML. Residues 238 to 258 traverse the membrane as a helical segment; that stretch reads LFCFVFFLPLLIIIFCYIFIF. Residues 259–293 are Cytoplasmic-facing; sequence RAIRETGRACEGCGESPLRQRRQWQRLQSEWKMAK. The chain crosses the membrane as a helical span at residues 294–314; it reads VALIVILLFVLSWAPYSTVAL. The Extracellular portion of the chain corresponds to 315–329; the sequence is VAFAGYSHILTPYMS. Residues 330-350 form a helical membrane-spanning segment; sequence SVPAVIAKASAIHNPIIYAIT. An N6-(retinylidene)lysine modification is found at Lys337. The Cytoplasmic portion of the chain corresponds to 351-521; sequence HPKYRVAIAQ…LEDDVTLRHL (171 aa). Residues 445 to 486 are disordered; sequence GELKASSSPQVQRSKTPKVPGPSTCRPMKGQGARPSSLRGDQ. Residues 449–458 show a composition bias toward polar residues; sequence ASSSPQVQRS.

Belongs to the G-protein coupled receptor 1 family. Opsin subfamily. As to expression, expressed in the retinal pigment epithelium and ganglion cell layer (at protein level). Also expressed in amacrine cell layers of the retina. Weakly expressed in vibrissae, and tail. In terms of tissue distribution, observed with processes in the outer strata of inner plexiform layer (IPL) close to the inner nuclear layer (INL) or is found to be bistratified with processes located both in the inner (ON) or outer (OFF) layers of the IPL (at protein level). A second population of isoform 1 is identified in processes which are confined to the inner layer of the IPL near to the ganglion cell layer (GCL) (at protein level). About 40 times more abundant than isoform 1 in the retina (at protein level). Isoform 2 is involved in processes localized to the outer IPL or is bistratified with processes in both the inner and outer layers of the IPL (at protein level). Isoform 2 is absent in the processes confined only to the inner layer of the IPL (at protein level).

It localises to the cell membrane. The protein resides in the cell projection. It is found in the axon. Its subcellular location is the dendrite. The protein localises to the perikaryon. Its function is as follows. Photoreceptor that binds cis-retinaldehydes. Contributes to pupillar reflex, photoentrainment and other non-image forming responses to light. May be involved in the optokinetic visual tracking response. May be involved in the regulation of retinal hyaloid vessel growth and regression. This is Melanopsin (Opn4) from Mus musculus (Mouse).